A 227-amino-acid chain; its full sequence is Thiocyanate methyltransferase 1 (227 aa).

The S-adenosyl-L-methionine site is built by tryptophan 36, tryptophan 40, tryptophan 47, and glycine 74. The residue at position 86 (serine 86) is a Phosphoserine. Residues aspartate 95, 123 to 124 (DV), and tyrosine 139 contribute to the S-adenosyl-L-methionine site.

It belongs to the class I-like SAM-binding methyltransferase superfamily. TPMT family. In terms of tissue distribution, expressed in shoots, leaves, stems, inflorescences, flowers and green siliques.

The catalysed reaction is thiocyanate + S-adenosyl-L-methionine = methyl thiocyanate + S-adenosyl-L-homocysteine. S-adenosyl-L-methionine-dependent methyltransferase. Involved in glucosinolate metabolism and defense against phytopathogens. Highly reactive to thiocyanate (NCS(-)) derived from myrosinase-mediated hydrolysis of glucosinolates upon tissue damage. In Arabidopsis thaliana (Mouse-ear cress), this protein is Thiocyanate methyltransferase 1.